A 241-amino-acid chain; its full sequence is Hydantoin racemase (241 aa).

It belongs to the HyuE racemase family. In terms of assembly, homotetramer.

It catalyses the reaction a D-5-monosubstituted hydantoin = a L-5-monosubstituted hydantoin. The enzyme catalyses D-5-benzylhydantoin = L-5-benzylhydantoin. The catalysed reaction is D-5-isobutylhydantoin = L-5-isobutylhydantoin. Inhibited by Cu(2+), Hg(2+), Pb(2+) and Zn(2+). The activity is twofold lower in the presence of Mn(2+), Co(2+) and Ni(2+). The insignificant effect of the metal chelating agent EDTA on the hydantoin racemase activity would indicate that it is not a metalloenzyme. In terms of biological role, may be involved in the asymmetric conversion of racemic 5-substituted hydantoins to the corresponding L-amino acids. Catalyzes the racemization via enolization of D- and L-5-monosubstituted hydantoins. This chain is Hydantoin racemase, found in Rhizobium meliloti (Ensifer meliloti).